The primary structure comprises 364 residues: Anthranilate phosphoribosyltransferase 1 (364 aa).

Residues Gly-102, 105–106, Thr-110, 112–115, 130–138, and Ser-142 contribute to the 5-phospho-alpha-D-ribose 1-diphosphate site; these read GD, NIST, and KHGNRSASS. Gly-102 serves as a coordination point for anthranilate. A Mg(2+)-binding site is contributed by Ser-114. Asn-133 provides a ligand contact to anthranilate. Arg-188 contacts anthranilate. Mg(2+) contacts are provided by Asp-247 and Glu-248.

It belongs to the anthranilate phosphoribosyltransferase family. As to quaternary structure, homodimer. The cofactor is Mg(2+).

It carries out the reaction N-(5-phospho-beta-D-ribosyl)anthranilate + diphosphate = 5-phospho-alpha-D-ribose 1-diphosphate + anthranilate. It participates in amino-acid biosynthesis; L-tryptophan biosynthesis; L-tryptophan from chorismate: step 2/5. In terms of biological role, catalyzes the transfer of the phosphoribosyl group of 5-phosphorylribose-1-pyrophosphate (PRPP) to anthranilate to yield N-(5'-phosphoribosyl)-anthranilate (PRA). The chain is Anthranilate phosphoribosyltransferase 1 from Nostoc sp. (strain PCC 7120 / SAG 25.82 / UTEX 2576).